A 160-amino-acid chain; its full sequence is Transcriptional repressor NrdR (160 aa).

A zinc finger spans residues 3–34 (CPYCQYEDTQVKDSRPAEEGAVIRRRRVCSVC). The region spanning 49-139 (LLITKKNGRC…VYRDFRNASD (91 aa)) is the ATP-cone domain.

This sequence belongs to the NrdR family. It depends on Zn(2+) as a cofactor.

In terms of biological role, negatively regulates transcription of bacterial ribonucleotide reductase nrd genes and operons by binding to NrdR-boxes. This Bartonella tribocorum (strain CIP 105476 / IBS 506) protein is Transcriptional repressor NrdR.